The sequence spans 98 residues: NADH-ubiquinone oxidoreductase chain 4L (98 aa).

Helical transmembrane passes span 2-22 (PSISTNIILAFITALLGMLIF), 29-49 (SLLCLEGMMLSMFILSTLTIL), and 61-81 (ILLLVFAACEAAVGLALLVTV).

It belongs to the complex I subunit 4L family. As to quaternary structure, core subunit of respiratory chain NADH dehydrogenase (Complex I) which is composed of 45 different subunits.

It localises to the mitochondrion inner membrane. The enzyme catalyses a ubiquinone + NADH + 5 H(+)(in) = a ubiquinol + NAD(+) + 4 H(+)(out). In terms of biological role, core subunit of the mitochondrial membrane respiratory chain NADH dehydrogenase (Complex I) which catalyzes electron transfer from NADH through the respiratory chain, using ubiquinone as an electron acceptor. Part of the enzyme membrane arm which is embedded in the lipid bilayer and involved in proton translocation. The sequence is that of NADH-ubiquinone oxidoreductase chain 4L (MT-ND4L) from Eulemur coronatus (Crowned lemur).